A 261-amino-acid polypeptide reads, in one-letter code: Calcium-binding protein 8 (261 aa).

The segment at M1 to T39 is disordered. Residues M1 to S234 are Cytoplasmic-facing. The segment covering G8–D19 has biased composition (basic and acidic residues). EF-hand domains are found at residues E78 to M113 and P114 to S149. Ca(2+)-binding residues include D91, D93, N95, E102, D127, D129, D131, Q133, and E138. A helical; Anchor for type IV membrane protein transmembrane segment spans residues L235–I255. At L256–E261 the chain is on the extracellular side.

As to quaternary structure, interacts with PI4KB. This binding competes with FREQ/NCS1 binding in a calcium-dependent manner. Brain specific.

Its subcellular location is the golgi apparatus. The protein localises to the trans-Golgi network membrane. It is found in the cytoplasm. It localises to the perinuclear region. The protein resides in the cell membrane. Its function is as follows. Negatively regulates Golgi-to-plasma membrane trafficking by interacting with PI4KB and inhibiting its activity. May play a role in the physiology of neurons and is potentially important in memory and learning. This Homo sapiens (Human) protein is Calcium-binding protein 8 (CALN1).